We begin with the raw amino-acid sequence, 178 residues long: ATP-dependent protease subunit HslV (178 aa).

Thr-5 is an active-site residue. The Na(+) site is built by Gly-161, Cys-164, and Thr-167.

It belongs to the peptidase T1B family. HslV subfamily. A double ring-shaped homohexamer of HslV is capped on each side by a ring-shaped HslU homohexamer. The assembly of the HslU/HslV complex is dependent on binding of ATP.

The protein localises to the cytoplasm. The enzyme catalyses ATP-dependent cleavage of peptide bonds with broad specificity.. Allosterically activated by HslU binding. Its function is as follows. Protease subunit of a proteasome-like degradation complex believed to be a general protein degrading machinery. The chain is ATP-dependent protease subunit HslV from Nitratiruptor sp. (strain SB155-2).